The following is a 111-amino-acid chain: Large ribosomal subunit protein uL22 (111 aa).

Belongs to the universal ribosomal protein uL22 family. As to quaternary structure, part of the 50S ribosomal subunit.

In terms of biological role, this protein binds specifically to 23S rRNA; its binding is stimulated by other ribosomal proteins, e.g. L4, L17, and L20. It is important during the early stages of 50S assembly. It makes multiple contacts with different domains of the 23S rRNA in the assembled 50S subunit and ribosome. Functionally, the globular domain of the protein is located near the polypeptide exit tunnel on the outside of the subunit, while an extended beta-hairpin is found that lines the wall of the exit tunnel in the center of the 70S ribosome. The sequence is that of Large ribosomal subunit protein uL22 from Xylella fastidiosa (strain 9a5c).